The following is a 44-amino-acid chain: U4-ctenitoxin-Co1a (44 aa).

Disulfide bonds link cysteine 2-cysteine 19, cysteine 9-cysteine 25, cysteine 18-cysteine 39, and cysteine 27-cysteine 37.

Expressed by the venom gland.

The protein resides in the secreted. In terms of biological role, omega-agatoxins are antagonists of voltage-gated calcium channels (Cav). Toxic to mice by intracerebroventricular injection. The polypeptide is U4-ctenitoxin-Co1a (Ctenus ornatus (Brazilian spider)).